We begin with the raw amino-acid sequence, 312 residues long: Protein lon-1 (312 aa).

Positions 1-18 (MNYLLTALIALLAPISVA) are cleaved as a signal peptide. The 123-residue stretch at 87–209 (EHNRYRRMVP…GHRNVFVCHY (123 aa)) folds into the SCP domain. N-linked (GlcNAc...) asparagine glycosylation is present at N142. Residues 265–284 (TTTTESTTTSTTTEEPTTTC) show a composition bias toward low complexity. The interval 265 to 312 (TTTTESTTTSTTTEEPTTTCEPDEPEAEGADNNQEEEEENNDGFRMRV) is disordered. Residues 285 to 305 (EPDEPEAEGADNNQEEEEENN) are compositionally biased toward acidic residues.

The protein belongs to the CRISP family. As to expression, expressed in hypodermal tissues.

Functionally, regulates body size morphogenesis, but does not affect male tail development. This chain is Protein lon-1 (lon-1), found in Caenorhabditis elegans.